The following is a 196-amino-acid chain: 7-methyl-GTP pyrophosphatase (196 aa).

Asp69 (proton acceptor) is an active-site residue.

This sequence belongs to the Maf family. YceF subfamily. A divalent metal cation serves as cofactor.

It is found in the cytoplasm. It carries out the reaction N(7)-methyl-GTP + H2O = N(7)-methyl-GMP + diphosphate + H(+). Nucleoside triphosphate pyrophosphatase that hydrolyzes 7-methyl-GTP (m(7)GTP). May have a dual role in cell division arrest and in preventing the incorporation of modified nucleotides into cellular nucleic acids. This chain is 7-methyl-GTP pyrophosphatase, found in Photorhabdus laumondii subsp. laumondii (strain DSM 15139 / CIP 105565 / TT01) (Photorhabdus luminescens subsp. laumondii).